A 362-amino-acid polypeptide reads, in one-letter code: 3-isopropylmalate dehydrogenase (362 aa).

Residues Arg97, Arg107, Arg135, and Asp225 each coordinate substrate. Positions 225, 249, and 253 each coordinate Mg(2+). 283 to 295 lines the NAD(+) pocket; the sequence is GSAPDIAHKNLAN.

Belongs to the isocitrate and isopropylmalate dehydrogenases family. LeuB type 1 subfamily. As to quaternary structure, homodimer. It depends on Mg(2+) as a cofactor. Requires Mn(2+) as cofactor.

It localises to the cytoplasm. It carries out the reaction (2R,3S)-3-isopropylmalate + NAD(+) = 4-methyl-2-oxopentanoate + CO2 + NADH. Its pathway is amino-acid biosynthesis; L-leucine biosynthesis; L-leucine from 3-methyl-2-oxobutanoate: step 3/4. In terms of biological role, catalyzes the oxidation of 3-carboxy-2-hydroxy-4-methylpentanoate (3-isopropylmalate) to 3-carboxy-4-methyl-2-oxopentanoate. The product decarboxylates to 4-methyl-2 oxopentanoate. The sequence is that of 3-isopropylmalate dehydrogenase from Prochlorococcus marinus (strain SARG / CCMP1375 / SS120).